The primary structure comprises 128 residues: Cystatin-2 (128 aa).

An N-terminal signal peptide occupies residues 1-19; sequence MSSFKVAVLLIAVYGASQG. Positions 29–116 constitute a Cystatin domain; sequence QDPTEARFLE…CVAVIYHVPW (88 aa). Cystine bridges form between C84-C96 and C107-C127.

Belongs to the cystatin family. Widely expressed. Detected in salivary glands (at protein level), gut (at protein level), ovaries, and Malpighian tubules.

The protein localises to the secreted. Functionally, inhibitor of cysteine proteinases with broad specificity for mammalian cathepsins, including endopeptidases (cathepsins L and S) and exopeptidases (cathepsins B, C and H). Also inhibits endogenous cathepsin B-like and cathepsin C-like proteinases. Does not inhibit human legumain. May mimic specific host-derived cystatin(s) to interfere with its/their function in controlling cathepsin-mediated proteolysis. Affects the function of antigen-presenting mouse dendritic cells by reducing the production of the pro-inflammatory cytokines TNF and interleukin-12, and proliferation of antigen-specific CD4+ T-cells, suggesting it may suppress the host adaptive immune response. It is noteworthy that immunization of mice with this protein reduces O.moubata survival in infestation experiments. The sequence is that of Cystatin-2 from Ornithodoros moubata (Soft tick).